The following is a 236-amino-acid chain: Large ribosomal subunit protein uL3 (236 aa).

Residues 139-163 form a disordered region; it reads ARDSSTTHEHHRHVGAIGQRKTPGK.

It belongs to the universal ribosomal protein uL3 family. Part of the 50S ribosomal subunit. Forms a cluster with proteins L14 and L19.

One of the primary rRNA binding proteins, it binds directly near the 3'-end of the 23S rRNA, where it nucleates assembly of the 50S subunit. This Anaeromyxobacter sp. (strain Fw109-5) protein is Large ribosomal subunit protein uL3.